The following is a 426-amino-acid chain: Enolase (426 aa).

Gln163 lines the (2R)-2-phosphoglycerate pocket. Glu205 (proton donor) is an active-site residue. Mg(2+) contacts are provided by Asp242, Glu286, and Asp313. (2R)-2-phosphoglycerate is bound by residues Lys338, Arg367, Ser368, and Lys389. Lys338 (proton acceptor) is an active-site residue.

This sequence belongs to the enolase family. Mg(2+) serves as cofactor.

Its subcellular location is the cytoplasm. It is found in the secreted. It localises to the cell surface. It catalyses the reaction (2R)-2-phosphoglycerate = phosphoenolpyruvate + H2O. It participates in carbohydrate degradation; glycolysis; pyruvate from D-glyceraldehyde 3-phosphate: step 4/5. Catalyzes the reversible conversion of 2-phosphoglycerate (2-PG) into phosphoenolpyruvate (PEP). It is essential for the degradation of carbohydrates via glycolysis. This Gemmatimonas aurantiaca (strain DSM 14586 / JCM 11422 / NBRC 100505 / T-27) protein is Enolase.